A 181-amino-acid chain; its full sequence is uncharacterized protein (181 aa).

The N-terminal stretch at 1–22 (MNKKSLLVVLVIALAVVPFAAT) is a signal peptide.

This is an uncharacterized protein from Halorubrum pleomorphic virus 1 (HRPV-1).